A 137-amino-acid polypeptide reads, in one-letter code: Global transcriptional regulator Spx (137 aa).

A disulfide bridge connects residues C10 and C13.

This sequence belongs to the ArsC family. Spx subfamily. In terms of assembly, interacts with the C-terminal domain of the alpha subunit of the RNAP.

The protein resides in the cytoplasm. Functionally, global transcriptional regulator that plays a key role in stress response and exerts either positive or negative regulation of genes. Acts by interacting with the C-terminal domain of the alpha subunit of the RNA polymerase (RNAP). This interaction can enhance binding of RNAP to the promoter region of target genes and stimulate their transcription, or block interaction of RNAP with activator. This Streptococcus mutans serotype c (strain ATCC 700610 / UA159) protein is Global transcriptional regulator Spx.